Consider the following 726-residue polypeptide: Tripartite terminase subunit 1 (726 aa).

The C3H1-type zinc finger occupies 189-217 (CMKCYEELTLTPNQGKSLRKRLHGKFCNH). ATP is bound at residue 626–633 (YNDVFGKR).

The protein belongs to the herpesviridae TRM1 protein family. Associates with TRM2 and TRM3 to form the tripartite terminase complex. Interacts with portal protein.

The protein localises to the host nucleus. In terms of biological role, component of the molecular motor that translocates viral genomic DNA in empty capsid during DNA packaging. Forms a tripartite terminase complex together with TRM2 and TRM3 in the host cytoplasm. Once the complex reaches the host nucleus, it interacts with the capsid portal vertex. This portal forms a ring in which genomic DNA is translocated into the capsid. TRM1 carries an endonuclease activity that plays an important role for the cleavage of concatemeric viral DNA into unit length genomes. The polypeptide is Tripartite terminase subunit 1 (Human herpesvirus 6B (strain Z29) (HHV-6 variant B)).